Here is a 189-residue protein sequence, read N- to C-terminus: dCTP deaminase (189 aa).

Residues 112–117, 136–138, Q157, Y171, and Q181 each bind dCTP; these read KSTYAR and TLE. The active-site Proton donor/acceptor is the E138.

This sequence belongs to the dCTP deaminase family. In terms of assembly, homotrimer.

The catalysed reaction is dCTP + H2O + H(+) = dUTP + NH4(+). The protein operates within pyrimidine metabolism; dUMP biosynthesis; dUMP from dCTP (dUTP route): step 1/2. In terms of biological role, catalyzes the deamination of dCTP to dUTP. The chain is dCTP deaminase from Xanthomonas euvesicatoria pv. vesicatoria (strain 85-10) (Xanthomonas campestris pv. vesicatoria).